A 333-amino-acid polypeptide reads, in one-letter code: Syntaxin-4 (333 aa).

The Cytoplasmic segment spans residues 1 to 312 (MGKDRLPELL…QHQKKARKKK (312 aa)). The segment covering 50–66 (YSVVSQNSHSCSNNNSS) has biased composition (low complexity). Residues 50-81 (YSVVSQNSHSCSNNNSSTEPKDRSSSKMTQYG) form a disordered region. A coiled-coil region spans residues 91–116 (YTEIRQQLAQIAANLETMNRMAQTVN). The region spanning 239–301 (LREMMDRFNE…DKGADELDQA (63 aa)) is the t-SNARE coiled-coil homology domain. The chain crosses the membrane as a helical; Anchor for type IV membrane protein span at residues 313 to 333 (IMLIVILAAVLLVLLLVGIYL).

Belongs to the syntaxin family.

It localises to the membrane. Functionally, potentially involved in docking of synaptic vesicles at presynaptic active zones. This is Syntaxin-4 from Drosophila melanogaster (Fruit fly).